Consider the following 623-residue polypeptide: Phosphatidylinositol-3-phosphatase SAC1 (623 aa).

Residues 1–523 (MTGPIVYVQN…SPFPDRRPVY (523 aa)) are Cytoplasmic-facing. Positions 115-454 (LELHLKNSTF…ADAVSVAYSG (340 aa)) constitute an SAC domain. Glycyl lysine isopeptide (Lys-Gly) (interchain with G-Cter in ubiquitin) cross-links involve residues Lys-246 and Lys-358. Residues 524–544 (IQLIPMIICAALTVLGATIFF) traverse the membrane as a helical segment. Residues 545–552 (PKDRFTSS) are Lumenal-facing. A helical membrane pass occupies residues 553-573 (KNLLYFAGASIVLALSTKFMF). At 574–623 (KNGIQFVNWPKLVDVGFLVVHQTHDKEQQFKGLKYAQSPKFSKPDPLKRD) the chain is on the cytoplasmic side.

In terms of assembly, component of the SPOTS complex, at least composed of LCB1/2 (LCB1 and/or LCB2), ORM1/2 (ORM1 and/or ORM2), SAC1 and TSC3.

Its subcellular location is the endoplasmic reticulum membrane. It localises to the golgi apparatus membrane. The catalysed reaction is a 1,2-diacyl-sn-glycero-3-phospho-(1D-myo-inositol-3-phosphate) + H2O = a 1,2-diacyl-sn-glycero-3-phospho-(1D-myo-inositol) + phosphate. It catalyses the reaction a 1,2-diacyl-sn-glycero-3-phospho-(1D-myo-inositol 4-phosphate) + H2O = a 1,2-diacyl-sn-glycero-3-phospho-(1D-myo-inositol) + phosphate. In terms of biological role, phosphoinositide phosphatase which catalyzes the hydrolysis of phosphatidylinositol 3-phosphate (PtdIns(3)P) and phosphatidylinositol 4-phosphate (PtdIns(4)P). Has low activity towards phosphatidylinositol-3,5-bisphosphate (PtdIns(3,5)P2). May be involved in the coordination of the activities of the secretory pathway and the actin cytoskeleton. This is Phosphatidylinositol-3-phosphatase SAC1 (SAC1) from Saccharomyces cerevisiae (strain ATCC 204508 / S288c) (Baker's yeast).